Here is a 395-residue protein sequence, read N- to C-terminus: Methylthioribose-1-phosphate isomerase (395 aa).

Aspartate 258 (proton donor) is an active-site residue.

It belongs to the eIF-2B alpha/beta/delta subunits family. MtnA subfamily.

It localises to the cytoplasm. It is found in the nucleus. It catalyses the reaction 5-(methylsulfanyl)-alpha-D-ribose 1-phosphate = 5-(methylsulfanyl)-D-ribulose 1-phosphate. Its pathway is amino-acid biosynthesis; L-methionine biosynthesis via salvage pathway; L-methionine from S-methyl-5-thio-alpha-D-ribose 1-phosphate: step 1/6. Catalyzes the interconversion of methylthioribose-1-phosphate (MTR-1-P) into methylthioribulose-1-phosphate (MTRu-1-P). The sequence is that of Methylthioribose-1-phosphate isomerase from Podospora anserina (strain S / ATCC MYA-4624 / DSM 980 / FGSC 10383) (Pleurage anserina).